Reading from the N-terminus, the 315-residue chain is Ferrochelatase (315 aa).

2 residues coordinate Fe cation: His-193 and Glu-273.

Belongs to the ferrochelatase family.

The protein resides in the cytoplasm. It catalyses the reaction heme b + 2 H(+) = protoporphyrin IX + Fe(2+). Its pathway is porphyrin-containing compound metabolism; protoheme biosynthesis; protoheme from protoporphyrin-IX: step 1/1. Catalyzes the ferrous insertion into protoporphyrin IX. This Wolbachia pipientis wMel protein is Ferrochelatase.